A 93-amino-acid polypeptide reads, in one-letter code: SH3 domain-binding glutamic acid-rich-like protein 3 (93 aa).

An N-acetylserine modification is found at Ser-2. The Glutaredoxin domain maps to 2-93; it reads SGLRVYSTSV…DTLQEFLKLA (92 aa). O-linked (GalNAc...) threonine glycosylation occurs at Thr-9.

This sequence belongs to the SH3BGR family. In terms of assembly, homodimer. Interacts with MYO1C (via its IQ motifs); the interaction is dependent on calcium and takes place at membrane ruffles. Post-translationally, may be glycosylated.

The protein resides in the cytoplasm. It localises to the cytosol. The protein localises to the cell projection. Its subcellular location is the ruffle membrane. It is found in the nucleus. In terms of biological role, could act as a modulator of glutaredoxin biological activity. May play a role in cytoskeleton organization. In Mus musculus (Mouse), this protein is SH3 domain-binding glutamic acid-rich-like protein 3 (Sh3bgrl3).